Consider the following 377-residue polypeptide: uncharacterized protein (377 aa).

This is an uncharacterized protein from Magallana gigas (Pacific oyster).